Reading from the N-terminus, the 838-residue chain is Tuftelin-interacting protein 11 (838 aa).

Residues 1-13 are compositionally biased toward basic and acidic residues; the sequence is MSLSHLYRDGEGH. The interval 1 to 51 is required for interaction with DHX15; sequence MSLSHLYRDGEGHLDDDDDDERENFEITDWDLQNEFNPNRQRHWQTKEEAT. Disordered regions lie at residues 1-74 and 86-137; these read MSLS…RARD and LKKG…SGGT. Ser2 carries the post-translational modification Phosphoserine. The segment covering 14–29 has biased composition (acidic residues); that stretch reads LDDDDDDERENFEITD. Residues 45 to 65 show a composition bias toward basic and acidic residues; it reads QTKEEATYGVWAERDSDEERP. Phosphoserine is present on residues Ser60, Ser96, and Ser99. Acidic residues predominate over residues 92-101; that stretch reads EEADSEDSDA. A compositionally biased stretch (basic and acidic residues) spans 102–117; that stretch reads EEKPVKQEDFPKDLGP. At Ser145 the chain carries Phosphoserine. Positions 150-196 constitute a G-patch domain; it reads TKGIGQKLLQKMGYVPGRGLGKNAQGIINPIEAKQRKGKGAVGAYGS. Residues 193-237 form a disordered region; that stretch reads AYGSERTTQSLQDFPVADSEEEAEEEFQKELSQWRKDPSGSKKKP. Residue Ser211 is modified to Phosphoserine. A compositionally biased stretch (basic and acidic residues) spans 218–232; sequence EFQKELSQWRKDPSG. The Nuclear localization signal motif lies at 701 to 706; sequence VKDKFN. Residues 711 to 735 form a required for nuclear speckle localization region; it reads IMNRAVSSNVGAYMQPGARENIAYL.

This sequence belongs to the TFP11/STIP family. In terms of assembly, identified in the spliceosome C complex. Found in the Intron Large (IL) complex, a post-mRNA release spliceosomal complex containing the excised intron, U2, U5 and U6 snRNPs, and splicing factors. Interacts with TUFT1. Interacts with DHX15; indicative for a recruitment of DHX15 to the IL complex. Interacts with GCFC2. As to expression, widely expressed. In tooth it is expressed in ameloblasts and odontoblasts.

It is found in the cytoplasm. It localises to the nucleus. In terms of biological role, involved in pre-mRNA splicing, specifically in spliceosome disassembly during late-stage splicing events. Intron turnover seems to proceed through reactions in two lariat-intron associated complexes termed Intron Large (IL) and Intron Small (IS). In cooperation with DHX15 seems to mediate the transition of the U2, U5 and U6 snRNP-containing IL complex to the snRNP-free IS complex leading to efficient debranching and turnover of excised introns. May play a role in the differentiation of ameloblasts and odontoblasts or in the forming of the enamel extracellular matrix. This is Tuftelin-interacting protein 11 (Tfip11) from Mus musculus (Mouse).